The chain runs to 363 residues: Protein TAX-1 (363 aa).

The required for localization to the flagellum and for flagellar motility stretch occupies residues 129 to 363 (RYGNAEEILS…IPFRGVAAEQ (235 aa)). TPR repeat units follow at residues 157 to 190 (AELH…LSVM) and 199 to 232 (TFAY…WLKH).

In terms of assembly, interacts with TTC29.

Its subcellular location is the cytoplasm. The protein localises to the cytoskeleton. It is found in the flagellum axoneme. Its function is as follows. Required for flagellum motility. This is Protein TAX-1 from Trypanosoma brucei brucei (strain 927/4 GUTat10.1).